Here is a 353-residue protein sequence, read N- to C-terminus: Photosystem II protein D1 (353 aa).

Residue T2 is modified to N-acetylthreonine. At T2 the chain carries Phosphothreonine. Helical transmembrane passes span 29–46 (YIGW…TATS), 118–133 (HFLL…EWEL), and 142–156 (WIAI…AATA). H118 contacts chlorophyll a. Y126 contacts pheophytin a. The [CaMn4O5] cluster site is built by D170 and E189. The chain crosses the membrane as a helical span at residues 197 to 218 (FHMLGVAGVFGGSLFSAMHGSL). Residue H198 participates in chlorophyll a binding. Residues H215 and 264-265 (SF) contribute to the a quinone site. Residue H215 coordinates Fe cation. H272 is a Fe cation binding site. A helical transmembrane segment spans residues 274 to 288 (FLAAWPVIGIWFTAL). [CaMn4O5] cluster is bound by residues H332, E333, D342, and A344. A propeptide spanning residues 345-353 (TFEVSATNA) is cleaved from the precursor.

This sequence belongs to the reaction center PufL/M/PsbA/D family. In terms of assembly, PSII is composed of 1 copy each of membrane proteins PsbA, PsbB, PsbC, PsbD, PsbE, PsbF, PsbH, PsbI, PsbJ, PsbK, PsbL, PsbM, PsbT, PsbX, PsbY, PsbZ, Psb30/Ycf12, at least 3 peripheral proteins of the oxygen-evolving complex and a large number of cofactors. It forms dimeric complexes. The D1/D2 heterodimer binds P680, chlorophylls that are the primary electron donor of PSII, and subsequent electron acceptors. It shares a non-heme iron and each subunit binds pheophytin, quinone, additional chlorophylls, carotenoids and lipids. D1 provides most of the ligands for the Mn4-Ca-O5 cluster of the oxygen-evolving complex (OEC). There is also a Cl(-1) ion associated with D1 and D2, which is required for oxygen evolution. The PSII complex binds additional chlorophylls, carotenoids and specific lipids. is required as a cofactor. In terms of processing, tyr-161 forms a radical intermediate that is referred to as redox-active TyrZ, YZ or Y-Z. C-terminally processed by CTPA; processing is essential to allow assembly of the oxygen-evolving complex and thus photosynthetic growth.

It is found in the plastid membrane. The catalysed reaction is 2 a plastoquinone + 4 hnu + 2 H2O = 2 a plastoquinol + O2. Functionally, photosystem II (PSII) is a light-driven water:plastoquinone oxidoreductase that uses light energy to abstract electrons from H(2)O, generating O(2) and a proton gradient subsequently used for ATP formation. It consists of a core antenna complex that captures photons, and an electron transfer chain that converts photonic excitation into a charge separation. The D1/D2 (PsbA/PsbD) reaction center heterodimer binds P680, the primary electron donor of PSII as well as several subsequent electron acceptors. This Cuscuta gronovii (Common dodder) protein is Photosystem II protein D1.